The following is a 234-amino-acid chain: tRNA1(Val) (adenine(37)-N6)-methyltransferase (234 aa).

The protein belongs to the methyltransferase superfamily. tRNA (adenine-N(6)-)-methyltransferase family.

It localises to the cytoplasm. The catalysed reaction is adenosine(37) in tRNA1(Val) + S-adenosyl-L-methionine = N(6)-methyladenosine(37) in tRNA1(Val) + S-adenosyl-L-homocysteine + H(+). Specifically methylates the adenine in position 37 of tRNA(1)(Val) (anticodon cmo5UAC). This Aliivibrio fischeri (strain MJ11) (Vibrio fischeri) protein is tRNA1(Val) (adenine(37)-N6)-methyltransferase.